Consider the following 92-residue polypeptide: MKTCEWCGELEAVPGRNTVYWELPDGTRAIELTDTPAMVCSSCGMTYQEENTVKEIEDQLLLIQTKKLPESLTYQQLMETERILKRNYFDFS.

This is an uncharacterized protein from Bacillus subtilis (strain 168).